The chain runs to 260 residues: Tryptophan synthase alpha chain (260 aa).

Catalysis depends on proton acceptor residues glutamate 52 and aspartate 63.

This sequence belongs to the TrpA family. In terms of assembly, tetramer of two alpha and two beta chains.

The catalysed reaction is (1S,2R)-1-C-(indol-3-yl)glycerol 3-phosphate + L-serine = D-glyceraldehyde 3-phosphate + L-tryptophan + H2O. The protein operates within amino-acid biosynthesis; L-tryptophan biosynthesis; L-tryptophan from chorismate: step 5/5. Its function is as follows. The alpha subunit is responsible for the aldol cleavage of indoleglycerol phosphate to indole and glyceraldehyde 3-phosphate. The protein is Tryptophan synthase alpha chain of Streptococcus thermophilus (strain ATCC BAA-250 / LMG 18311).